We begin with the raw amino-acid sequence, 113 residues long: N(2)-fixation sustaining protein CowN (113 aa).

The protein belongs to the CowN family.

Is required to sustain N(2)-dependent growth in the presence of low levels of carbon monoxide (CO). Probably acts by protecting the N(2) fixation ability of the nitrogenase complex, which is inactivated in the presence of CO. In Azoarcus sp. (strain BH72), this protein is N(2)-fixation sustaining protein CowN.